Consider the following 1037-residue polypeptide: Tyrosine-protein kinase-like otk (1037 aa).

Positions 1-23 (MDMDVMMISMCILASTFMAPGWA) are cleaved as a signal peptide. Ig-like C2-type domains lie at 24 to 109 (STSG…REAS), 110 to 199 (PPAK…RVMS), 251 to 365 (PEDL…APLN), 368 to 464 (PGLL…VSIN), and 469 to 559 (PKFS…VQLV). The Extracellular segment spans residues 24–582 (STSGFLRVPQ…GGDGFLVTRA (559 aa)). 5 disulfide bridges follow: Cys47–Cys96, Cys138–Cys188, Cys276–Cys354, Cys399–Cys448, and Cys491–Cys543. Residues Asn336, Asn418, Asn430, Asn445, Asn513, and Asn525 are each glycosylated (N-linked (GlcNAc...) asparagine). Residues 583–603 (VLITMTVALAYIVLVVGLMLW) traverse the membrane as a helical segment. At 604-1037 (CRYRRQARKA…SKAMQSVAEK (434 aa)) the chain is on the cytoplasmic side. 2 disordered regions span residues 623–683 (AGGD…KSVY) and 720–777 (SAQS…KEEE). Residues 658-676 (KSNGDAQKSDDTACSQQSR) show a composition bias toward polar residues. Ser681 is subject to Phosphoserine. The 339-residue stretch at 693–1031 (LSELLQIGRG…QLGSALSKAM (339 aa)) folds into the Protein kinase; inactive domain. Residues 723–734 (SDKDADTEKQHS) show a composition bias toward basic and acidic residues. Gly residues predominate over residues 739-749 (GSGGSGSGSGS). Acidic residues predominate over residues 768–777 (DDIEEIKEEE).

It belongs to the protein kinase superfamily. Tyr protein kinase family. Insulin receptor subfamily. As to quaternary structure, interacts with plexA; component of a receptor complex that mediates the repulsive signaling in response to Semaphorin ligands.

It localises to the cell membrane. Functionally, acts as a calcium-dependent, homophilic cell adhesion molecule that regulates neural recognition during the development of the nervous system. Component of the repulsive Plexin signaling response to regulate motor axon guidance at the embryonic stage. Also component of a receptor complex that is required in the adult visual system to innervate the lamina layer; specific targeting of R1-R6 axons. The chain is Tyrosine-protein kinase-like otk from Drosophila pseudoobscura pseudoobscura (Fruit fly).